We begin with the raw amino-acid sequence, 513 residues long: uncharacterized protein (513 aa).

Residues M1 to K48 form a disordered region. Residues G37–K48 are compositionally biased toward polar residues. Phosphoserine is present on residues S43, S84, and S123. Disordered regions lie at residues D210–A229, T236–S287, A390–P414, and S453–C481.

This is an uncharacterized protein from Mus musculus (Mouse).